The sequence spans 138 residues: Protein NrdI (138 aa).

The protein belongs to the NrdI family.

Probably involved in ribonucleotide reductase function. The chain is Protein NrdI from Beutenbergia cavernae (strain ATCC BAA-8 / DSM 12333 / CCUG 43141 / JCM 11478 / NBRC 16432 / NCIMB 13614 / HKI 0122).